Reading from the N-terminus, the 276-residue chain is Undecaprenyl-diphosphatase (276 aa).

The next 6 helical transmembrane spans lie at 43–63 (RAMAFNIIIQLGAILAVVWEF), 85–105 (LNLLIAFMPAVVLGVIFADTI), 109–129 (LFNAITVATALVVGGVIMLWA), 183–203 (AATEFSFFLAMPTMVGAAVYS), 218–238 (VFAIGFITSFVFAMIAVRALL), and 254–274 (IAFGLLILATWQFGWIDWASA).

It belongs to the UppP family.

The protein localises to the cell inner membrane. The enzyme catalyses di-trans,octa-cis-undecaprenyl diphosphate + H2O = di-trans,octa-cis-undecaprenyl phosphate + phosphate + H(+). Functionally, catalyzes the dephosphorylation of undecaprenyl diphosphate (UPP). Confers resistance to bacitracin. The chain is Undecaprenyl-diphosphatase from Pseudomonas syringae pv. tomato (strain ATCC BAA-871 / DC3000).